Consider the following 299-residue polypeptide: Regucalcin (299 aa).

An a divalent metal cation-binding site is contributed by Glu-18. Substrate is bound by residues Arg-101, Asn-103, and Glu-121. A divalent metal cation-binding residues include Asn-154 and Asp-204. Catalysis depends on Asp-204, which acts as the Proton donor/acceptor.

Belongs to the SMP-30/CGR1 family. Zn(2+) serves as cofactor. The cofactor is Mn(2+). Requires Ca(2+) as cofactor. Mg(2+) is required as a cofactor. As to expression, expressed in the liver, and in the pronephros from the late tadpole stage.

The protein resides in the cytoplasm. The enzyme catalyses D-glucono-1,5-lactone + H2O = D-gluconate + H(+). It functions in the pathway cofactor biosynthesis; L-ascorbate biosynthesis via UDP-alpha-D-glucuronate pathway; L-ascorbate from UDP-alpha-D-glucuronate: step 3/4. Functionally, gluconolactonase with low activity towards other sugar lactones, including gulonolactone and galactonolactone. Catalyzes a key step in ascorbic acid (vitamin C) biosynthesis. Can also hydrolyze diisopropyl phosphorofluoridate and phenylacetate (in vitro). Calcium-binding protein. Modulates Ca(2+) signaling, and Ca(2+)-dependent cellular processes and enzyme activities. This chain is Regucalcin, found in Xenopus laevis (African clawed frog).